The chain runs to 446 residues: Probable beta-1,4-xylosyltransferase IRX9L (446 aa).

The interval 1-26 (MSRRNAGAMQREGSVKDWEEFDPSPS) is disordered. The Cytoplasmic segment spans residues 1-85 (MSRRNAGAMQ…SRSKGMSLKR (85 aa)). The helical; Signal-anchor for type II membrane protein transmembrane segment at 86-106 (AMLQLLVCFMVGIFIGFTPPF) threads the bilayer. At 107 to 446 (SVDLPGKIAS…RNLDAVVPIT (340 aa)) the chain is on the lumenal side. N-linked (GlcNAc...) asparagine glycans are attached at residues asparagine 185, asparagine 258, asparagine 361, and asparagine 411.

The protein belongs to the glycosyltransferase 43 family.

The protein localises to the golgi apparatus membrane. Its function is as follows. Probable beta-1,4-xylosyltransferase involved in xylan biosynthesis in cell walls. The polypeptide is Probable beta-1,4-xylosyltransferase IRX9L (Oryza sativa subsp. japonica (Rice)).